Reading from the N-terminus, the 120-residue chain is Large ribosomal subunit protein uL18 (120 aa).

The protein belongs to the universal ribosomal protein uL18 family. Part of the 50S ribosomal subunit; part of the 5S rRNA/L5/L18/L25 subcomplex. Contacts the 5S and 23S rRNAs.

Its function is as follows. This is one of the proteins that bind and probably mediate the attachment of the 5S RNA into the large ribosomal subunit, where it forms part of the central protuberance. This chain is Large ribosomal subunit protein uL18, found in Halalkalibacterium halodurans (strain ATCC BAA-125 / DSM 18197 / FERM 7344 / JCM 9153 / C-125) (Bacillus halodurans).